Reading from the N-terminus, the 176-residue chain is MPTNWKDSGLRWYWMVVLVFIADQLSKQWVLANFELRESVELLPFFNFTYLRNYGAAFSFLSDAGGWQRWFFTFVAVGFSTLLTIWLRKQPRQMWRLNLAYTLVIGGALGNLIDRLQHGYVVDFLHFYWNTSHFPAFNIADSAICVGAALIIIDSIITERDDKKKKAQENNNTAKE.

The next 3 membrane-spanning stretches (helical) occupy residues 12–32 (WYWMVVLVFIADQLSKQWVLA), 67–87 (WQRWFFTFVAVGFSTLLTIWL), and 94–116 (MWRLNLAYTLVIGGALGNLIDRL). Active-site residues include Asp123 and Asp141. The chain crosses the membrane as a helical span at residues 137–157 (FNIADSAICVGAALIIIDSII).

This sequence belongs to the peptidase A8 family.

It localises to the cell inner membrane. It carries out the reaction Release of signal peptides from bacterial membrane prolipoproteins. Hydrolyzes -Xaa-Yaa-Zaa-|-(S,diacylglyceryl)Cys-, in which Xaa is hydrophobic (preferably Leu), and Yaa (Ala or Ser) and Zaa (Gly or Ala) have small, neutral side chains.. It participates in protein modification; lipoprotein biosynthesis (signal peptide cleavage). Functionally, this protein specifically catalyzes the removal of signal peptides from prolipoproteins. This is Lipoprotein signal peptidase from Shewanella woodyi (strain ATCC 51908 / MS32).